The chain runs to 171 residues: UPF0303 protein YPK_1581 (171 aa).

Belongs to the UPF0303 family.

This is UPF0303 protein YPK_1581 from Yersinia pseudotuberculosis serotype O:3 (strain YPIII).